A 66-amino-acid chain; its full sequence is Pancreatic polypeptide prohormone (66 aa).

Tyr36 carries the post-translational modification Tyrosine amide. Positions 60–66 (ELSPMDV) are excised as a propeptide.

It belongs to the NPY family.

It is found in the secreted. Hormone secreted by pancreatic cells that acts as a regulator of pancreatic and gastrointestinal functions probably by signaling through the G protein-coupled receptor NPY4R2. This is Pancreatic polypeptide prohormone (PPY) from Felis catus (Cat).